The following is a 144-amino-acid chain: MSNVAENISKLPEEQEKINKLVDQYKNLMPQEQKEVDKKLKLYFTKDELEQDELKSRMNKIRSNLSQQEQEKLQAGNSTIGEIAKDVLSLVKGIINLVENISKVIKNPTGAVYEWFQNELNQVKPQQQNNHQLQSKPKAASISR.

The span at 125–135 (PQQQNNHQLQS) shows a compositional bias: polar residues. The segment at 125–144 (PQQQNNHQLQSKPKAASISR) is disordered.

This is an uncharacterized protein from Rickettsia prowazekii (strain Madrid E).